The sequence spans 784 residues: Cyclin-dependent kinase 11B (784 aa).

The span at 18-60 shows a compositional bias: basic and acidic residues; that stretch reads QEKKRRKEQEEKAEIKRLKNSDDRDSKRDSLEEGELRDHRMEI. Positions 18–401 are disordered; it reads QEKKRRKEQE…EGDYVPDSPA (384 aa). Phosphoserine is present on residues S47 and S72. The span at 95–113 shows a compositional bias: basic residues; that stretch reads EKAHHRKDEKRKEKRRHRS. Basic and acidic residues-rich tracts occupy residues 114-131, 138-227, and 238-263; these read HSAE…EREH, REEQ…DKGK, and PPRE…RDLL. S115 bears the Phosphoserine mark. S270 is modified (phosphoserine). The span at 278 to 289 shows a compositional bias: low complexity; it reads SAESSSAESGSG. 2 stretches are compositionally biased toward acidic residues: residues 290–353 and 372–381; these read SEEE…EDRE and DSEEGEEEVG. Residues 427 to 712 form the Protein kinase domain; sequence FQCLNRIEEG…AEDGLKHEYF (286 aa). ATP is bound by residues 433–441 and K456; that span reads IEEGTYGVV. Residue S471 is modified to Phosphoserine; by CDK7. Position 477 is a phosphothreonine; by CDK7 (T477). The active-site Proton acceptor is the D551. S578 carries the phosphoserine modification. Y583 bears the Phosphotyrosine mark. At T584 the chain carries Phosphothreonine. A Glycyl lysine isopeptide (Lys-Gly) (interchain with G-Cter in SUMO2) cross-link involves residue K630. Residues 722–784 are disordered; it reads SMFPTWPAKS…AAGPGFSLKF (63 aa). Position 740 is a phosphothreonine (T740). S741 carries the post-translational modification Phosphoserine.

The protein belongs to the protein kinase superfamily. CMGC Ser/Thr protein kinase family. CDC2/CDKX subfamily. In terms of assembly, may interact PAK1 and RANBP9. p110C interacts with RNPS1. Interacts with CCND3. Interacts with CCNL1 and CCNL2. Forms complexes with pre-mRNA-splicing factors, including at least SRSF1, SRSF2 AND SRSF7/SLU7. It depends on Mg(2+) as a cofactor. Post-translationally, phosphorylation at Ser-115 creates a binding site for 14-3-3 proteins.

The enzyme catalyses L-seryl-[protein] + ATP = O-phospho-L-seryl-[protein] + ADP + H(+). It carries out the reaction L-threonyl-[protein] + ATP = O-phospho-L-threonyl-[protein] + ADP + H(+). Phosphorylation at Thr-437 or Tyr-438 inactivates the enzyme, while phosphorylation at Thr-584 activates it. Plays multiple roles in cell cycle progression, cytokinesis and apoptosis. Involved in pre-mRNA splicing in a kinase activity-dependent manner. May act as a negative regulator of normal cell cycle progression. This Mus musculus (Mouse) protein is Cyclin-dependent kinase 11B (Cdk11b).